Here is a 586-residue protein sequence, read N- to C-terminus: Pyruvate kinase (586 aa).

Arg32 contacts substrate. Residues Asn34, Ser36, Asp66, and Thr67 each contribute to the K(+) site. 34–37 (NFSH) contributes to the ATP binding site. Residues Arg73 and Lys156 each contribute to the ATP site. Glu222 serves as a coordination point for Mg(2+). Residues Gly245, Asp246, and Thr278 each coordinate substrate. Asp246 contributes to the Mg(2+) binding site.

This sequence belongs to the pyruvate kinase family. It in the C-terminal section; belongs to the PEP-utilizing enzyme family. As to quaternary structure, homotetramer. Requires Mg(2+) as cofactor. K(+) serves as cofactor.

The enzyme catalyses pyruvate + ATP = phosphoenolpyruvate + ADP + H(+). It functions in the pathway carbohydrate degradation; glycolysis; pyruvate from D-glyceraldehyde 3-phosphate: step 5/5. The chain is Pyruvate kinase (pyk) from Sporosarcina psychrophila (Bacillus psychrophilus).